We begin with the raw amino-acid sequence, 257 residues long: Cilia- and flagella-associated protein 300 (257 aa).

Belongs to the CFAP300 family.

Its subcellular location is the cytoplasm. The protein localises to the cytoskeleton. It localises to the flagellum axoneme. In terms of biological role, cilium- and flagellum-specific protein that plays a role in axonemal structure organization and motility. Plays a role in outer and inner dynein arm assembly. The chain is Cilia- and flagella-associated protein 300 from Chlamydomonas reinhardtii (Chlamydomonas smithii).